The following is a 398-amino-acid chain: MKALKKVSNILCVLGLCTLMGGTSYAWDGKKDGTGTHSLIAEHGLSMLNNDLSGNESQQVKDNIKILNEYLGDLKLGSTYPDYDPNAYDLYQDHFYDPDTGNNFTIDNSWYASYPIYDTSRNSVRKFATLAKNEWEKGNFKEATFLLGQGLHYLGDLNTPYHASNVTAVDSPGHVKYETFVEERKDNYALNTSGNDTTSGVYKEAMENPSFNKWMTQNSIKYAKIAKDLYYSHSTMSHSWDDWDYSGREAIKNSQVCTAGFLYRFMNEVSNGNTGDNDSLTNEFNIVLKTADNKYAGTDDNVYFGFETNEGKKFEWKLDNAGNDFERNQVDNYILKTKDGEEVDINNISNYWIRKERLTSISDDWELSNFKLIANGKVIQQQDVNKVFTGNETYYINK.

The N-terminal stretch at 1 to 26 (MKALKKVSNILCVLGLCTLMGGTSYA) is a signal peptide. 9 residues coordinate Zn(2+): Trp-27, His-37, Asp-82, His-94, His-152, Asp-156, His-162, His-174, and Glu-178. A Zn-dependent PLC domain is found at 27–276 (WDGKKDGTGT…NEVSNGNTGD (250 aa)). Residues 273–281 (NTGDNDSLT) are linker. One can recognise a PLAT domain in the interval 282–398 (NEFNIVLKTA…TGNETYYINK (117 aa)). 9 residues coordinate Ca(2+): Gly-297, Thr-298, Asp-299, Asp-319, Asn-320, Gly-322, Asn-323, Asp-324, and Asp-363.

This sequence belongs to the bacterial zinc-metallophospholipase C family. Ca(2+) is required as a cofactor. Requires Zn(2+) as cofactor.

The protein resides in the secreted. It carries out the reaction a 1,2-diacyl-sn-glycero-3-phosphocholine + H2O = phosphocholine + a 1,2-diacyl-sn-glycerol + H(+). Functionally, bacterial hemolysins are exotoxins that attack blood cell membranes and cause cell rupture. Binds to eukaryotic membranes where it hydrolyzes phosphatidylcholine. This enzyme has 10-fold less activity towards sphingomyelin than its C.perfringens counterpart, is approximately 100-fold less hemolytic against mouse erythrocytes and at least 100-fold less toxic in mice. In Paraclostridium bifermentans (Clostridium bifermentans), this protein is Phospholipase C (plc).